The sequence spans 453 residues: Homogentisate 1,2-dioxygenase (453 aa).

H306 (proton acceptor) is an active-site residue. Fe cation is bound by residues H349 and E355. Homogentisate is bound by residues Y364 and H385. H385 lines the Fe cation pocket.

It belongs to the homogentisate dioxygenase family. In terms of assembly, hexamer; dimer of trimers. The cofactor is Fe cation.

It carries out the reaction homogentisate + O2 = 4-maleylacetoacetate + H(+). The protein operates within amino-acid degradation; L-phenylalanine degradation; acetoacetate and fumarate from L-phenylalanine: step 4/6. In terms of biological role, involved in the catabolism of homogentisate (2,5-dihydroxyphenylacetate or 2,5-OH-PhAc), a central intermediate in the degradation of phenylalanine and tyrosine. Catalyzes the oxidative ring cleavage of the aromatic ring of homogentisate to yield maleylacetoacetate. The sequence is that of Homogentisate 1,2-dioxygenase from Rhizobium johnstonii (strain DSM 114642 / LMG 32736 / 3841) (Rhizobium leguminosarum bv. viciae).